We begin with the raw amino-acid sequence, 829 residues long: Periplasmic nitrate reductase (829 aa).

Residues 1 to 30 (MKLSRRDFMKANAVAAAAAVAGVSAPTLAA) constitute a signal peptide (tat-type signal). Positions 41-97 (ITWDKAPCRFCGTGCSVLVGSQDGRVVATQGDPDAPVNRGLNCIKGYFLSKIMYGQD) constitute a 4Fe-4S Mo/W bis-MGD-type domain. Residues Cys-48, Cys-51, Cys-55, and Cys-83 each contribute to the [4Fe-4S] cluster site. Mo-bis(molybdopterin guanine dinucleotide) contacts are provided by residues Lys-85, Gln-152, Asn-177, Cys-181, 214 to 221 (WGSNMAEM), 245 to 249 (STFEH), 264 to 266 (QTD), Met-374, Gln-378, Asn-484, 510 to 511 (SD), Lys-533, Asp-560, and 719 to 728 (TGRVLEHWHT). Residue Phe-795 coordinates substrate. Mo-bis(molybdopterin guanine dinucleotide) contacts are provided by Asn-803 and Lys-820.

Belongs to the prokaryotic molybdopterin-containing oxidoreductase family. NasA/NapA/NarB subfamily. In terms of assembly, component of the periplasmic nitrate reductase NapAB complex composed of NapA and NapB. It depends on [4Fe-4S] cluster as a cofactor. Requires Mo-bis(molybdopterin guanine dinucleotide) as cofactor. In terms of processing, predicted to be exported by the Tat system. The position of the signal peptide cleavage has not been experimentally proven.

The protein resides in the periplasm. It catalyses the reaction 2 Fe(II)-[cytochrome] + nitrate + 2 H(+) = 2 Fe(III)-[cytochrome] + nitrite + H2O. Its function is as follows. Catalytic subunit of the periplasmic nitrate reductase complex NapAB. Receives electrons from NapB and catalyzes the reduction of nitrate to nitrite. In Aeromonas hydrophila subsp. hydrophila (strain ATCC 7966 / DSM 30187 / BCRC 13018 / CCUG 14551 / JCM 1027 / KCTC 2358 / NCIMB 9240 / NCTC 8049), this protein is Periplasmic nitrate reductase.